A 313-amino-acid chain; its full sequence is Ribosomal protein L11 methyltransferase (313 aa).

Thr-161, Gly-182, Asp-204, and Asn-247 together coordinate S-adenosyl-L-methionine.

It belongs to the methyltransferase superfamily. PrmA family.

The protein localises to the cytoplasm. The enzyme catalyses L-lysyl-[protein] + 3 S-adenosyl-L-methionine = N(6),N(6),N(6)-trimethyl-L-lysyl-[protein] + 3 S-adenosyl-L-homocysteine + 3 H(+). Its function is as follows. Methylates ribosomal protein L11. The protein is Ribosomal protein L11 methyltransferase of Alkaliphilus oremlandii (strain OhILAs) (Clostridium oremlandii (strain OhILAs)).